The sequence spans 149 residues: Transcriptional repressor NrdR (149 aa).

A zinc finger spans residues 3–34; that stretch reads CPFCGHAATQVIDTRMSEEGDTVRRRRRCESC. The ATP-cone domain maps to 49-139; it reads PAVVKKNGSR…VYRSFEDVSE (91 aa).

Belongs to the NrdR family. Requires Zn(2+) as cofactor.

Its function is as follows. Negatively regulates transcription of bacterial ribonucleotide reductase nrd genes and operons by binding to NrdR-boxes. The chain is Transcriptional repressor NrdR from Ralstonia nicotianae (strain ATCC BAA-1114 / GMI1000) (Ralstonia solanacearum).